The primary structure comprises 198 residues: Recombination protein RecR (198 aa).

The segment at Cys57–Cys72 adopts a C4-type zinc-finger fold. A Toprim domain is found at Ser80–Pro175.

It belongs to the RecR family.

In terms of biological role, may play a role in DNA repair. It seems to be involved in an RecBC-independent recombinational process of DNA repair. It may act with RecF and RecO. The polypeptide is Recombination protein RecR (Symbiobacterium thermophilum (strain DSM 24528 / JCM 14929 / IAM 14863 / T)).